The following is a 1088-amino-acid chain: Neural cell adhesion molecule 1-A (1088 aa).

The first 19 residues, 1 to 19, serve as a signal peptide directing secretion; it reads MLHIKDLIWTLYFIGTAVA. Ig-like C2-type domains are found at residues 20–108, 113–202, 209–294, 303–397, and 400–484; these read LEVN…GTVN, QKLT…KDIQ, PTIQ…AEAT, PKIT…FEVQ, and PKIR…HEFS. Over 20-705 the chain is Extracellular; it reads LEVNIVPDQG…TASAGTGLGT (686 aa). Disulfide bonds link C41/C93 and C136/C186. An N-linked (GlcNAc...) asparagine glycan is attached at N82. Residues 149-153 and 158-162 each bind heparin; these read RHKGK and KKDVR. N219 carries an N-linked (GlcNAc...) asparagine glycan. C232 and C282 are disulfide-bonded. Residues N310, N341, N417, N443, and N472 are each glycosylated (N-linked (GlcNAc...) asparagine). Cysteines 323 and 379 form a disulfide. C420 and C473 are joined by a disulfide. Fibronectin type-III domains lie at 493-592 and 594-690; these read TPSS…TQPV and EPSA…TAKP. Residues 706–723 form a helical membrane-spanning segment; sequence GAIVGILIVIFVLLLVVV. Over 724–1088 the chain is Cytoplasmic; that stretch reads DVTCFFLNKC…TQTNANESKA (365 aa). A compositionally biased stretch (basic and acidic residues) spans 758–784; sequence EGKAAFSKDESKEPIVEVRTEEERTPN. Disordered regions lie at residues 758–802, 829–1000, and 1024–1088; these read EGKA…LTEP, FATA…DGGT, and VASG…ESKA. Low complexity-rich tracts occupy residues 835–847, 854–875, and 913–936; these read SPTSETTTLTSST, APDSNTIQSIQATPSKAEAPTT, and PSAATSAAEPPTVIIKPVTTVPPN. Over residues 965–974 the composition is skewed to polar residues; sequence QPSTVKNPTE. The span at 1046–1064 shows a compositional bias: basic and acidic residues; sequence AKTEKTQVEEKSKPEEIDV. Polar residues predominate over residues 1076 to 1088; sequence NEATQTNANESKA.

In terms of processing, polysialylated by ST8SIA2 and ST8SIA4. Polysialylation modulates cell interactions by confering both attractive and repulsive properties that are highly regulated by ST8SIA2 and ST8SIA4. Polysialylation is formed on a-2,3-linked sialic acid of core glycans. Expressed in neuron and in presumptive neural tissue.

It localises to the cell membrane. Its function is as follows. This protein is a cell adhesion molecule involved in neuron-neuron adhesion, neurite fasciculation, outgrowth of neurites, etc. This is Neural cell adhesion molecule 1-A from Xenopus laevis (African clawed frog).